The primary structure comprises 158 residues: MLRGQQIWLSNLTQPQTSAGPVPAVESPPALCSTSLPQVCLDPASPALLPKPTWTLSWSRPGSCVMPGAAAASLLSPRTLRLESPRGAGLSLMRPRPFPLICCCSTCSGPPPSTFLATRIRSQPSILSTPGSFPPSGPIWPPPPGGMLPIAALRMYVS.

Its function is as follows. Acts by interacting with multiple viral and host proteins to enhance the activity of viral RNA-dependent RNA polymerase. The sequence is that of Protein ORF4 from Hepatitis E virus genotype 1 (isolate Human/Pakistan/Sar-55) (HEV-1).